Here is a 208-residue protein sequence, read N- to C-terminus: Small ribosomal subunit protein uS4 (208 aa).

The region spanning 98–158 (RRLDNVVYRL…EKSRKIACIN (61 aa)) is the S4 RNA-binding domain.

Belongs to the universal ribosomal protein uS4 family. As to quaternary structure, part of the 30S ribosomal subunit. Contacts protein S5. The interaction surface between S4 and S5 is involved in control of translational fidelity.

Functionally, one of the primary rRNA binding proteins, it binds directly to 16S rRNA where it nucleates assembly of the body of the 30S subunit. Its function is as follows. With S5 and S12 plays an important role in translational accuracy. The chain is Small ribosomal subunit protein uS4 from Geobacter sulfurreducens (strain ATCC 51573 / DSM 12127 / PCA).